A 188-amino-acid polypeptide reads, in one-letter code: Putative manganese efflux pump MntP (188 aa).

6 consecutive transmembrane segments (helical) span residues 3 to 23, 39 to 59, 65 to 85, 110 to 130, 131 to 151, and 167 to 187; these read LFSL…VSIC, AGLY…LLGV, ITDY…VNML, LGFA…FLSV, DIYS…IIGV, and ILGG…HTLF.

This sequence belongs to the MntP (TC 9.B.29) family.

Its subcellular location is the cell inner membrane. Functionally, probably functions as a manganese efflux pump. This is Putative manganese efflux pump MntP from Mannheimia succiniciproducens (strain KCTC 0769BP / MBEL55E).